The sequence spans 38 residues: Photosystem II reaction center protein L (38 aa).

The helical transmembrane segment at 17-37 (SLYWGLLLIFVLAVLFSSYIF) threads the bilayer.

It belongs to the PsbL family. In terms of assembly, PSII is composed of 1 copy each of membrane proteins PsbA, PsbB, PsbC, PsbD, PsbE, PsbF, PsbH, PsbI, PsbJ, PsbK, PsbL, PsbM, PsbT, PsbY, PsbZ, Psb30/Ycf12, at least 3 peripheral proteins of the oxygen-evolving complex and a large number of cofactors. It forms dimeric complexes.

The protein resides in the plastid. It is found in the chloroplast thylakoid membrane. Functionally, one of the components of the core complex of photosystem II (PSII). PSII is a light-driven water:plastoquinone oxidoreductase that uses light energy to abstract electrons from H(2)O, generating O(2) and a proton gradient subsequently used for ATP formation. It consists of a core antenna complex that captures photons, and an electron transfer chain that converts photonic excitation into a charge separation. This subunit is found at the monomer-monomer interface and is required for correct PSII assembly and/or dimerization. The chain is Photosystem II reaction center protein L from Bigelowiella natans (Pedinomonas minutissima).